Consider the following 161-residue polypeptide: Protein-export protein SecB (161 aa).

The protein belongs to the SecB family. As to quaternary structure, homotetramer, a dimer of dimers. One homotetramer interacts with 1 SecA dimer.

Its subcellular location is the cytoplasm. Functionally, one of the proteins required for the normal export of preproteins out of the cell cytoplasm. It is a molecular chaperone that binds to a subset of precursor proteins, maintaining them in a translocation-competent state. It also specifically binds to its receptor SecA. The sequence is that of Protein-export protein SecB from Coxiella burnetii (strain CbuG_Q212) (Coxiella burnetii (strain Q212)).